A 103-amino-acid polypeptide reads, in one-letter code: Small ubiquitin-related modifier 2 (103 aa).

The Ubiquitin-like domain maps to 15–92 (AHINLKVKGQ…IDAMLHQTGG (78 aa)). Residue Gly-92 forms a Glycyl lysine isopeptide (Gly-Lys) (interchain with K-? in acceptor proteins) linkage.

The protein belongs to the ubiquitin family. SUMO subfamily. In terms of assembly, interacts with SAE2, SCE1, SIZ1 and MMS21. Interacts with HSFA2. Covalently attached to ABI5, FLD, GTE3, HSFA2 and ICE1.

It localises to the nucleus. It is found in the cytoplasm. In terms of biological role, ubiquitin-like protein which can be covalently attached to target lysines as a monomer. Does not seem to be involved in protein degradation and may function as an antagonist of ubiquitin in the degradation process. Required for the massive protein sumoylation in the nucleus induced by heat shock and controlled by SIZ1. In Arabidopsis thaliana (Mouse-ear cress), this protein is Small ubiquitin-related modifier 2.